A 235-amino-acid polypeptide reads, in one-letter code: Elongation factor Tu (235 aa).

The tr-type G domain occupies 1 to 125; that stretch reads KNMITGAAQM…QVDEYIPAPE (125 aa). 47 to 50 contributes to the GTP binding site; it reads NKQD.

Belongs to the TRAFAC class translation factor GTPase superfamily. Classic translation factor GTPase family. EF-Tu/EF-1A subfamily. Monomer.

Its subcellular location is the cytoplasm. The enzyme catalyses GTP + H2O = GDP + phosphate + H(+). Its function is as follows. GTP hydrolase that promotes the GTP-dependent binding of aminoacyl-tRNA to the A-site of ribosomes during protein biosynthesis. The sequence is that of Elongation factor Tu (tufA) from Leptolyngbya ectocarpi (Phormidium ectocarpi).